The primary structure comprises 120 residues: FK506-binding protein 1B (120 aa).

The segment at 1 to 24 (MNPPQGVTKTILRPGNGRDSPHTG) is disordered. The 97-residue stretch at 24 to 120 (GDTVIIDYTG…LVLYVCSPAG (97 aa)) folds into the PPIase FKBP-type domain.

This sequence belongs to the FKBP-type PPIase family. FKBP1 subfamily.

The catalysed reaction is [protein]-peptidylproline (omega=180) = [protein]-peptidylproline (omega=0). Functionally, PPIases accelerate the folding of proteins. It catalyzes the cis-trans isomerization of proline imidic peptide bonds in oligopeptides. The chain is FK506-binding protein 1B (FKBP3) from Emericella nidulans (strain FGSC A4 / ATCC 38163 / CBS 112.46 / NRRL 194 / M139) (Aspergillus nidulans).